A 228-amino-acid polypeptide reads, in one-letter code: Uracil-DNA glycosylase (228 aa).

D64 serves as the catalytic Proton acceptor.

It belongs to the uracil-DNA glycosylase (UDG) superfamily. UNG family.

Its subcellular location is the cytoplasm. It catalyses the reaction Hydrolyzes single-stranded DNA or mismatched double-stranded DNA and polynucleotides, releasing free uracil.. Functionally, excises uracil residues from the DNA which can arise as a result of misincorporation of dUMP residues by DNA polymerase or due to deamination of cytosine. The protein is Uracil-DNA glycosylase of Pectobacterium carotovorum subsp. carotovorum (strain PC1).